The primary structure comprises 653 residues: DNA-directed RNA polymerase III subunit RPC-3 (653 aa).

Disordered regions lie at residues isoleucine 141–proline 186, aspartate 280–aspartate 309, and isoleucine 422–glycine 442. Over residues alanine 159–glutamine 170 the composition is skewed to basic and acidic residues. Acidic residues-rich tracts occupy residues proline 293–aspartate 309 and glutamate 424–glycine 433. The leucine-zipper stretch occupies residues threonine 580–leucine 601.

Belongs to the RNA polymerase beta chain family. Component of the RNA polymerase III (Pol III) complex consisting of 17 subunits.

It is found in the nucleus. DNA-dependent RNA polymerase catalyzes the transcription of DNA into RNA using the four ribonucleoside triphosphates as substrates. Specific core component of RNA polymerase III which synthesizes small RNAs, such as 5S rRNA and tRNAs. The protein is DNA-directed RNA polymerase III subunit RPC-3 (RPC-82) of Coccidioides immitis (strain RS) (Valley fever fungus).